The primary structure comprises 261 residues: (R)-S-adenosyl-L-methionine hydrolase (261 aa).

3 residues coordinate adenosine: Asp12, Asp72, and Asn187. The (R)-S-adenosyl-L-methionine site is built by Asn187, Ser231, and Val239. Val239 contributes to the adenosine binding site.

It belongs to the SAM hydrolase / SAM-dependent halogenase family.

The enzyme catalyses (R)-S-adenosyl-L-methionine + H2O = adenosine + L-methionine + H(+). Its function is as follows. Specifically hydrolyzes (R)-S-adenosyl-L-methionine ((R)-SAM), the inactive form of the ubiquitous cofactor SAM, into adenosine and L-methionine. Is stereoselective as it cannot use the active form of SAM, (S)-S-adenosyl-L-methionine, as substrate. Likely plays a role in preventing accumulation of (R)-S-adenosyl-L-methionine in cells; maintenance of (S)-S-denosyl-L-methionine homochirality is important for cellular health given that the (R)-form is largely inactive as a methyl donor and can function as an inhibitor of methyltransferases. The chain is (R)-S-adenosyl-L-methionine hydrolase from Salinispora tropica (strain ATCC BAA-916 / DSM 44818 / JCM 13857 / NBRC 105044 / CNB-440).